The primary structure comprises 598 residues: Fructan 6-exohydrolase (598 aa).

The first 30 residues, 1-30 (MAARLPLAACVVAFHLCLLLSSLVRSPSTA), serve as a signal peptide directing secretion. Aspartate 65 is a catalytic residue. Residues asparagine 93, asparagine 288, and asparagine 351 are each glycosylated (N-linked (GlcNAc...) asparagine). Residues cysteine 451 and cysteine 497 are joined by a disulfide bond. An N-linked (GlcNAc...) asparagine glycan is attached at asparagine 572.

It belongs to the glycosyl hydrolase 32 family. Expressed in leaves, stems, roots and inflorescences. Maximum expression is detected in stems, particularly the penultimate internode.

The enzyme catalyses Hydrolysis of terminal, non-reducing (2-&gt;6)-linked beta-D-fructofuranose residues in fructans.. Not inhibited by sucrose. Functionally, hydrolyzes levan-type beta-(2-&gt;6)-linked fructans to fructose, but not inulin-type beta-(2-&gt;1)-linked fructans. The chain is Fructan 6-exohydrolase from Triticum aestivum (Wheat).